A 97-amino-acid polypeptide reads, in one-letter code: Eotaxin (97 aa).

A signal peptide spans 1–23; sequence MQLSTALLFLLLTATSFTSQVLA. 2 cysteine pairs are disulfide-bonded: cysteine 32/cysteine 57 and cysteine 33/cysteine 73. Threonine 94 carries O-linked (GalNAc...) threonine glycosylation.

The protein belongs to the intercrine beta (chemokine CC) family.

It is found in the secreted. Functionally, in response to the presence of allergens, this protein directly promotes the accumulation of eosinophils (a prominent feature of allergic inflammatory reactions), but not lymphocytes, macrophages or neutrophils. Binds to CCR3. This is Eotaxin (Ccl11) from Rattus norvegicus (Rat).